A 390-amino-acid chain; its full sequence is Succinate--CoA ligase [ADP-forming] subunit beta (390 aa).

The region spanning 9–245 is the ATP-grasp domain; it reads KHLLKKYNIP…TTQEDEHETM (237 aa). Residues K46, 53-55, E99, S102, and E107 contribute to the ATP site; that span reads GRG. Mg(2+)-binding residues include N200 and D214. Substrate is bound by residues N265 and 322–324; that span reads GIV.

The protein belongs to the succinate/malate CoA ligase beta subunit family. Heterotetramer of two alpha and two beta subunits. It depends on Mg(2+) as a cofactor.

The catalysed reaction is succinate + ATP + CoA = succinyl-CoA + ADP + phosphate. It catalyses the reaction GTP + succinate + CoA = succinyl-CoA + GDP + phosphate. It functions in the pathway carbohydrate metabolism; tricarboxylic acid cycle; succinate from succinyl-CoA (ligase route): step 1/1. Functionally, succinyl-CoA synthetase functions in the citric acid cycle (TCA), coupling the hydrolysis of succinyl-CoA to the synthesis of either ATP or GTP and thus represents the only step of substrate-level phosphorylation in the TCA. The beta subunit provides nucleotide specificity of the enzyme and binds the substrate succinate, while the binding sites for coenzyme A and phosphate are found in the alpha subunit. This is Succinate--CoA ligase [ADP-forming] subunit beta from Coxiella burnetii (strain RSA 331 / Henzerling II).